We begin with the raw amino-acid sequence, 240 residues long: Adenosylcobinamide-GDP ribazoletransferase (240 aa).

Helical transmembrane passes span 31-51, 62-81, 109-129, 133-153, and 179-199; these read LLYYPLVGLLFGLLLWLASHL, ALLLTLWVLLSGALHLDGLA, IAVVTLVLVLLLKFCALWVLV, IGAQLLLAPLIGRAAMLGLFL, and VLLVCVLFCLFLGGWSVLLAL.

The protein belongs to the CobS family. Mg(2+) serves as cofactor.

The protein resides in the cell inner membrane. It catalyses the reaction alpha-ribazole + adenosylcob(III)inamide-GDP = adenosylcob(III)alamin + GMP + H(+). The enzyme catalyses alpha-ribazole 5'-phosphate + adenosylcob(III)inamide-GDP = adenosylcob(III)alamin 5'-phosphate + GMP + H(+). The protein operates within cofactor biosynthesis; adenosylcobalamin biosynthesis; adenosylcobalamin from cob(II)yrinate a,c-diamide: step 7/7. In terms of biological role, joins adenosylcobinamide-GDP and alpha-ribazole to generate adenosylcobalamin (Ado-cobalamin). Also synthesizes adenosylcobalamin 5'-phosphate from adenosylcobinamide-GDP and alpha-ribazole 5'-phosphate. This Pseudomonas putida (strain ATCC 700007 / DSM 6899 / JCM 31910 / BCRC 17059 / LMG 24140 / F1) protein is Adenosylcobinamide-GDP ribazoletransferase.